The sequence spans 375 residues: Growth/differentiation factor 8 (375 aa).

Residues 1–18 (MQKLQISVYIYLFVLILA) form the signal peptide. A propeptide spanning residues 19–266 (GPVDLNENSE…VTDTPKRSRR (248 aa)) is cleaved from the precursor. N-linked (GlcNAc...) asparagine glycosylation is present at Asn-71. Intrachain disulfides connect Cys-272/Cys-282, Cys-281/Cys-340, Cys-309/Cys-372, and Cys-313/Cys-374.

This sequence belongs to the TGF-beta family. In terms of assembly, homodimer; disulfide-linked. Interacts with WFIKKN2, leading to inhibit its activity. Interacts with FSTL3. In terms of processing, synthesized as large precursor molecule that undergoes proteolytic cleavage to generate an N-terminal propeptide and a disulfide linked C-terminal dimer, which is the biologically active molecule. The circulating form consists of a latent complex of the C-terminal dimer and other proteins, including its propeptide, which maintain the C-terminal dimer in a latent, inactive state. Ligand activation requires additional cleavage of the prodomain by a tolloid-like metalloproteinase.

Its subcellular location is the secreted. In terms of biological role, acts specifically as a negative regulator of skeletal muscle growth. The polypeptide is Growth/differentiation factor 8 (MSTN) (Equus caballus (Horse)).